We begin with the raw amino-acid sequence, 297 residues long: Ribosomal RNA small subunit methyltransferase A (297 aa).

S-adenosyl-L-methionine contacts are provided by asparagine 31, leucine 33, glycine 58, glutamate 79, aspartate 104, and asparagine 129.

It belongs to the class I-like SAM-binding methyltransferase superfamily. rRNA adenine N(6)-methyltransferase family. RsmA subfamily.

It localises to the cytoplasm. It carries out the reaction adenosine(1518)/adenosine(1519) in 16S rRNA + 4 S-adenosyl-L-methionine = N(6)-dimethyladenosine(1518)/N(6)-dimethyladenosine(1519) in 16S rRNA + 4 S-adenosyl-L-homocysteine + 4 H(+). Its function is as follows. Specifically dimethylates two adjacent adenosines (A1518 and A1519) in the loop of a conserved hairpin near the 3'-end of 16S rRNA in the 30S particle. May play a critical role in biogenesis of 30S subunits. The polypeptide is Ribosomal RNA small subunit methyltransferase A (Staphylococcus aureus (strain MRSA252)).